The sequence spans 326 residues: Phospho-N-acetylmuramoyl-pentapeptide-transferase (326 aa).

The next 9 helical transmembrane spans lie at 3–23, 51–71, 79–99, 115–135, 138–158, 169–189, 195–215, 221–243, and 304–324; these read ISISAGIVTFLLTLVGIPAFI, TMGGLIFLIAAVVVSFLVALF, VGMILFILVLYGLVGFLDDFL, LALQLLGGVIFYLFYERGGDM, IFGYQVHLGIFYIVFALFWLV, GIDGLASISVVISLSAYGVIA, MDILLVILAMIGGLLGFFVFN, VFMGDVGSLALGGMLAAISMALH, and VDFFFWGVGLLASLLTLAILY.

This sequence belongs to the glycosyltransferase 4 family. MraY subfamily. Mg(2+) is required as a cofactor.

The protein resides in the cell membrane. The catalysed reaction is UDP-N-acetyl-alpha-D-muramoyl-L-alanyl-gamma-D-glutamyl-L-lysyl-D-alanyl-D-alanine + di-trans,octa-cis-undecaprenyl phosphate = Mur2Ac(oyl-L-Ala-gamma-D-Glu-L-Lys-D-Ala-D-Ala)-di-trans,octa-cis-undecaprenyl diphosphate + UMP. Its pathway is cell wall biogenesis; peptidoglycan biosynthesis. Its function is as follows. Catalyzes the initial step of the lipid cycle reactions in the biosynthesis of the cell wall peptidoglycan: transfers peptidoglycan precursor phospho-MurNAc-pentapeptide from UDP-MurNAc-pentapeptide onto the lipid carrier undecaprenyl phosphate, yielding undecaprenyl-pyrophosphoryl-MurNAc-pentapeptide, known as lipid I. This Streptococcus pneumoniae (strain Hungary19A-6) protein is Phospho-N-acetylmuramoyl-pentapeptide-transferase.